The chain runs to 655 residues: Hepatocyte growth factor activator serine protease (655 aa).

Positions 1–35 are cleaved as a signal peptide; the sequence is MGRWAWVPSPWPPPGLGPFLLLLLLLLLLPRGFQP. The propeptide at 36-372 is removed in mature form; sequence QPGGNRTESP…RLEACESLTR (337 aa). N-linked (GlcNAc...) asparagine glycans are attached at residues Asn-40 and Asn-48. Residues 64–102 form a disordered region; sequence TSETPATSAPEAEGPQSGGLPPPPRAVPSSSSPQAQALT. The region spanning 103-150 is the Fibronectin type-II domain; the sequence is EDGRPCRFPFRYGGRMLHACTSEGSAHRKWCATTHNYDRDRAWGYCVE. Intrachain disulfides connect Cys-108-Cys-133, Cys-122-Cys-148, Cys-164-Cys-175, Cys-169-Cys-186, Cys-188-Cys-197, Cys-202-Cys-230, Cys-228-Cys-237, Cys-245-Cys-256, Cys-250-Cys-267, Cys-269-Cys-278, Cys-286-Cys-367, Cys-307-Cys-349, Cys-338-Cys-362, Cys-394-Cys-521, Cys-432-Cys-448, Cys-440-Cys-510, Cys-535-Cys-604, Cys-567-Cys-583, and Cys-594-Cys-622. The EGF-like 1 domain maps to 160–198; the sequence is ALDPCASGPCLNGGSCSNTQDPQSYHCSCPRAFTGKDCG. Residues 200 to 240 form the Fibronectin type-I domain; sequence EKCFDETRYEYLEGGDRWARVRQGHVEQCECFGGRTWCEGT. The region spanning 241 to 279 is the EGF-like 2 domain; the sequence is RHTACLSSPCLNGGTCHLIVATGTTVCACPPGFAGRLCN. Residues 286–367 enclose the Kringle domain; it reads CFLGNGTGYR…SWEYCRLEAC (82 aa). Asn-290 is a glycosylation site (N-linked (GlcNAc...) asparagine). One can recognise a Peptidase S1 domain in the interval 408–646; it reads IIGGSSSLPG…YVDWINDRIR (239 aa). The active-site Charge relay system is the His-447. Residues Asn-468 and Asn-492 are each glycosylated (N-linked (GlcNAc...) asparagine). The active-site Charge relay system is the Asp-497. A glycan (N-linked (GlcNAc...) asparagine) is linked at Asn-546. The Charge relay system role is filled by Ser-598.

The protein belongs to the peptidase S1 family. In terms of assembly, heterodimer of a short chain and a long chain linked by a disulfide bond. In terms of processing, the active form of HGFAC presents in the serum is derived from the COOH-terminal region of the precursor by the cleavage of bonds between Arg-372 and Val-373 and Arg-407 and Ile-408. As to expression, liver.

Its subcellular location is the secreted. Its function is as follows. Serine protease that hydrolyzes the inactive zymogen hepatocyte growth factor (HGFsc) to an activated disulfide-linked heterodimer, then initiating hepatocyte growth factor receptor signaling pathway. This is Hepatocyte growth factor activator serine protease from Homo sapiens (Human).